Here is a 329-residue protein sequence, read N- to C-terminus: MTWRDEIARRVRGEHLRDAPLAPRTAVRVGGPADLLCRPADGDALSALLGAVRELGVPLSVLGGGANTLVADAGVRGVVLRLPQDFPGESTDGDTLVLSAGAPIARLPARAHAHGLVGMEFLGGIPGTLGGAAAMNAGTRLGEMKDVVTRLELATADGAGFVPAAALGYAYRTCRLPPGAVVARVEVRLRPGDVAASEALMREDRERRRATQPLDRPTFGSTFTNPPGEYAGRLIEAVGLKGHRVGGAVWSPVHANFVTNLGGATARDVLALIRLARARVKERFGIALETEVRLMGEFPPDELAGLDGHAADGGGPGAASGGARPREAT.

In terms of domain architecture, FAD-binding PCMH-type spans 28-192; that stretch reads RVGGPADLLC…ARVEVRLRPG (165 aa). Residue arginine 172 is part of the active site. Positions 204–225 are disordered; it reads DRERRRATQPLDRPTFGSTFTN. Serine 221 (proton donor) is an active-site residue. Glutamate 291 is an active-site residue. Residues 303–329 form a disordered region; the sequence is LAGLDGHAADGGGPGAASGGARPREAT. Residues 311 to 320 show a composition bias toward gly residues; that stretch reads ADGGGPGAAS.

It belongs to the MurB family. FAD serves as cofactor.

The protein localises to the cytoplasm. It catalyses the reaction UDP-N-acetyl-alpha-D-muramate + NADP(+) = UDP-N-acetyl-3-O-(1-carboxyvinyl)-alpha-D-glucosamine + NADPH + H(+). It functions in the pathway cell wall biogenesis; peptidoglycan biosynthesis. Functionally, cell wall formation. This chain is UDP-N-acetylenolpyruvoylglucosamine reductase, found in Anaeromyxobacter dehalogenans (strain 2CP-C).